We begin with the raw amino-acid sequence, 457 residues long: Glutamate--tRNA ligase 1 (457 aa).

The 'HIGH' region motif lies at 9 to 19 (PSPTGYIHIGN). The 'KMSKS' region motif lies at 250–254 (GLSKR). Lys253 contributes to the ATP binding site.

This sequence belongs to the class-I aminoacyl-tRNA synthetase family. Glutamate--tRNA ligase type 1 subfamily. Monomer.

The protein resides in the cytoplasm. The catalysed reaction is tRNA(Glu) + L-glutamate + ATP = L-glutamyl-tRNA(Glu) + AMP + diphosphate. Functionally, catalyzes the attachment of glutamate to tRNA(Glu) in a two-step reaction: glutamate is first activated by ATP to form Glu-AMP and then transferred to the acceptor end of tRNA(Glu). The chain is Glutamate--tRNA ligase 1 from Brucella ovis (strain ATCC 25840 / 63/290 / NCTC 10512).